Here is a 1335-residue protein sequence, read N- to C-terminus: Phospholipid-transporting ATPase IK (1335 aa).

The Cytoplasmic portion of the chain corresponds to 1 to 74 (MDGVHLGENL…LYEQFHRMSN (74 aa)). Residues 75–95 (LYFLFIIILQGIPEISTLPWF) form a helical membrane-spanning segment. At 96 to 295 (TLFAPLVCLF…LDLMMNKLVA (200 aa)) the chain is on the exoplasmic loop side. Residues 296–316 (LIFLSLVIASLLLTVGFTFMV) traverse the membrane as a helical segment. Over 317–339 (KQFKAKHYYMSPTHGRSDAMESF) the chain is Cytoplasmic. The helical transmembrane segment at 340–360 (FIFWGFLILLSVMVPMAMFII) threads the bilayer. Topologically, residues 361–917 (AEFIYLGNSI…YMRVCKFLRY (557 aa)) are exoplasmic loop. The active-site 4-aspartylphosphate intermediate is the aspartate 407. ATP is bound by residues aspartate 407, lysine 408, threonine 409, glutamate 504, phenylalanine 545, lysine 568, arginine 601, threonine 681, glycine 682, aspartate 683, arginine 831, and lysine 837. Aspartate 407 provides a ligand contact to Mg(2+). A Mg(2+)-binding site is contributed by threonine 409. A Mg(2+)-binding site is contributed by aspartate 857. Asparagine 860 and aspartate 861 together coordinate ATP. Aspartate 861 contacts Mg(2+). Residues 918 to 938 (FFYKTVASMMAQIWFSLVNGF) form a helical membrane-spanning segment. Residues 939–946 (SAQPLYEG) lie on the Cytoplasmic side of the membrane. A helical transmembrane segment spans residues 947 to 967 (WFLALFNLLYSTLPVLYIGLF). Residues 968 to 995 (EQDVTAEKSLKMPELYMAGQKGELFNYS) lie on the Exoplasmic loop side of the membrane. The chain crosses the membrane as a helical span at residues 996-1016 (IFMQAITHGTITSMINFFVTV). The Cytoplasmic segment spans residues 1017-1033 (MVSSDMSKAGSSHDYQS). A helical membrane pass occupies residues 1034-1054 (LGVLVAISSLLSVTLEVMLVV). Residue lysine 1055 is a topological domain, exoplasmic loop. Residues 1056–1076 (YWTLLFVGAVVLSLSSYVLMT) form a helical membrane-spanning segment. The Cytoplasmic segment spans residues 1077–1104 (SLTQSLWMYRISPKTFPFLFADYNVLFE). Residues 1105–1125 (PCSLLLIVLNVALNVLPMLAL) traverse the membrane as a helical segment. Residues 1126–1335 (RTIHRTVLKQ…SQLEVPRKQS (210 aa)) are Exoplasmic loop-facing. Disordered stretches follow at residues 1192–1215 (VDDSDGGTVCESLNPPEEDIPLQN), 1236–1280 (FGKG…GKLL), and 1314–1335 (SPLWRDSASSSPSQLEVPRKQS). Composition is skewed to polar residues over residues 1246 to 1255 (PNTSSQTMEK) and 1266 to 1276 (QKLPTTTSATS).

This sequence belongs to the cation transport ATPase (P-type) (TC 3.A.3) family. Type IV subfamily. Mg(2+) serves as cofactor. In terms of tissue distribution, expressed in testis, specifically in spermatids within seminiferous tubules (at protein level).

Its subcellular location is the cytoplasmic vesicle. The protein resides in the secretory vesicle. The protein localises to the acrosome membrane. It is found in the endoplasmic reticulum membrane. The enzyme catalyses ATP + H2O + phospholipidSide 1 = ADP + phosphate + phospholipidSide 2.. The catalysed reaction is a 1,2-diacyl-sn-glycero-3-phospho-L-serine(out) + ATP + H2O = a 1,2-diacyl-sn-glycero-3-phospho-L-serine(in) + ADP + phosphate + H(+). P4-ATPase flippase which catalyzes the hydrolysis of ATP coupled to the transport of aminophospholipids from the outer to the inner leaflet of various membranes and ensures the maintenance of asymmetric distribution of phospholipids. Phospholipid translocation also seems to be implicated in vesicle formation and in uptake of lipid signaling molecules. May be responsible for the maintenance of asymmetric distribution of phosphatidylserine (PS) in spermatozoa membranes. Involved in acrosome reactions and binding of spermatozoa to zona pellucida. The chain is Phospholipid-transporting ATPase IK from Mus musculus (Mouse).